Consider the following 716-residue polypeptide: Protein Hook homolog 2 (716 aa).

The tract at residues 1 to 161 is required for localization to the centrosome and induction of aggresome formation; that stretch reads MSVDKAELCG…ELMTKDTPDS (161 aa). The segment at 1 to 546 is sufficient for interaction with microtubules; that stretch reads MSVDKAELCG…LKRKLEDHLQ (546 aa). In terms of domain architecture, Calponin-homology (CH) spans 6–122; the sequence is AELCGSLLTW…KLLQLVLGCA (117 aa). Residue serine 163 is modified to Phosphoserine. Coiled-coil stretches lie at residues 188–427 and 455–605; these read DHLQ…AQLQ and AELR…VDKA. Positions 533 to 716 are required for localization to the centrosome and induction of aggresome formation; the sequence is DPTLLKRKLE…ALSLRPTDKH (184 aa). Residues 582–716 form a sufficient for interaction with CNTRL region; sequence DSLQKKDADL…ALSLRPTDKH (135 aa).

The protein belongs to the hook family. In terms of assembly, self-associates. Component of the FTS/Hook/FHIP complex (FHF complex), composed of AKTIP/FTS, FHIP1B, and one or more members of the Hook family of proteins HOOK1, HOOK2, and HOOK3. May interact directly with AKTIP/FTS, HOOK1 and HOOK3. Associates with several subunits of the homotypic vesicular sorting complex (the HOPS complex) including VPS16 and VPS41; these interactions may be indirect. Interacts with CNTRL. Interacts with microtubules. Interacts with ZC3H14. Interacts with LRGUK (via guanylate kinase-like domain). Interacts with CCDC181. Interacts with AP4M1; the interaction is direct, mediates the interaction between FTS-Hook-FHIP (FHF) complex and AP-4 and the perinuclear distribution of AP-4. Expressed in brain, cerebellum, kidney, liver and heart, with highest levels in heart and kidney (at protein level).

It is found in the cytoplasm. The protein resides in the cytoskeleton. Its subcellular location is the microtubule organizing center. The protein localises to the centrosome. It localises to the golgi apparatus. It is found in the trans-Golgi network. Component of the FTS/Hook/FHIP complex (FHF complex). The FHF complex may function to promote vesicle trafficking and/or fusion via the homotypic vesicular protein sorting complex (the HOPS complex). Contributes to the establishment and maintenance of centrosome function. May function in the positioning or formation of aggresomes, which are pericentriolar accumulations of misfolded proteins, proteasomes and chaperones. FHF complex promotes the distribution of AP-4 complex to the perinuclear area of the cell. The protein is Protein Hook homolog 2 (Hook2) of Mus musculus (Mouse).